The primary structure comprises 202 residues: Ras-related protein ORAB-1 (202 aa).

GTP-binding positions include 15 to 23 (GDSGVGKSC), 33 to 40 (YTESYIST), 63 to 67 (DTAGQ), 121 to 124 (NKCD), and 151 to 153 (SAK). The Effector region signature appears at 37–45 (YISTIGVDF). Positions 173–202 (MGPGATSGGSEKSNVNIQSTPVKSSGGGCC) are disordered. A compositionally biased stretch (polar residues) spans 180–195 (GGSEKSNVNIQSTPVK). S-geranylgeranyl cysteine attachment occurs at residues cysteine 201 and cysteine 202.

This sequence belongs to the small GTPase superfamily. Rab family.

It localises to the cell membrane. In terms of biological role, protein transport. Probably involved in vesicular traffic. This chain is Ras-related protein ORAB-1, found in Diplobatis ommata (Ocellated electric ray).